Here is a 345-residue protein sequence, read N- to C-terminus: S-adenosylmethionine:tRNA ribosyltransferase-isomerase (345 aa).

This sequence belongs to the QueA family. As to quaternary structure, monomer.

The protein resides in the cytoplasm. It catalyses the reaction 7-aminomethyl-7-carbaguanosine(34) in tRNA + S-adenosyl-L-methionine = epoxyqueuosine(34) in tRNA + adenine + L-methionine + 2 H(+). Its pathway is tRNA modification; tRNA-queuosine biosynthesis. Its function is as follows. Transfers and isomerizes the ribose moiety from AdoMet to the 7-aminomethyl group of 7-deazaguanine (preQ1-tRNA) to give epoxyqueuosine (oQ-tRNA). This is S-adenosylmethionine:tRNA ribosyltransferase-isomerase from Shewanella putrefaciens (strain CN-32 / ATCC BAA-453).